The following is a 136-amino-acid chain: Large ribosomal subunit protein uL16 (136 aa).

It belongs to the universal ribosomal protein uL16 family. As to quaternary structure, part of the 50S ribosomal subunit.

Binds 23S rRNA and is also seen to make contacts with the A and possibly P site tRNAs. The chain is Large ribosomal subunit protein uL16 from Enterobacter sp. (strain 638).